We begin with the raw amino-acid sequence, 328 residues long: 5,10-methylenetetrahydromethanopterin reductase (328 aa).

The protein belongs to the mer family.

It localises to the cytoplasm. It catalyses the reaction 5-methyl-5,6,7,8-tetrahydromethanopterin + oxidized coenzyme F420-(gamma-L-Glu)(n) + H(+) = 5,10-methylenetetrahydromethanopterin + reduced coenzyme F420-(gamma-L-Glu)(n). It participates in one-carbon metabolism; methanogenesis from CO(2); methyl-coenzyme M from 5,10-methylene-5,6,7,8-tetrahydromethanopterin: step 1/2. Its function is as follows. Catalyzes the reversible reduction of methylene-H(4)MPT to methyl-H(4)MPT. This Methanosarcina acetivorans (strain ATCC 35395 / DSM 2834 / JCM 12185 / C2A) protein is 5,10-methylenetetrahydromethanopterin reductase.